The following is a 362-amino-acid chain: Peptide chain release factor 1 (362 aa).

Gln-237 is modified (N5-methylglutamine).

It belongs to the prokaryotic/mitochondrial release factor family. Methylated by PrmC. Methylation increases the termination efficiency of RF1.

It is found in the cytoplasm. In terms of biological role, peptide chain release factor 1 directs the termination of translation in response to the peptide chain termination codons UAG and UAA. The sequence is that of Peptide chain release factor 1 from Marinomonas sp. (strain MWYL1).